Consider the following 658-residue polypeptide: Threonine--tRNA ligase (658 aa).

The TGS domain occupies 1–63 (MDQITITFPD…DDNASIDFVA (63 aa)). The interval 245–548 (DHRKLGRELD…LIEHYAGNFP (304 aa)) is catalytic. Zn(2+) contacts are provided by Cys341, His392, and His525.

It belongs to the class-II aminoacyl-tRNA synthetase family. In terms of assembly, homodimer. Zn(2+) is required as a cofactor.

The protein localises to the cytoplasm. It carries out the reaction tRNA(Thr) + L-threonine + ATP = L-threonyl-tRNA(Thr) + AMP + diphosphate + H(+). In terms of biological role, catalyzes the attachment of threonine to tRNA(Thr) in a two-step reaction: L-threonine is first activated by ATP to form Thr-AMP and then transferred to the acceptor end of tRNA(Thr). Also edits incorrectly charged L-seryl-tRNA(Thr). The polypeptide is Threonine--tRNA ligase (Rhodopseudomonas palustris (strain ATCC BAA-98 / CGA009)).